The primary structure comprises 111 residues: Toxin 3FTx-Tri3 (111 aa).

The signal sequence occupies residues 1 to 19 (MKTLLLALVVVAFMCLGSA). The propeptide occupies 20-34 (DEVGLGNEQIDRGRR). Residue Gln35 is modified to Pyrrolidone carboxylic acid. 4 cysteine pairs are disulfide-bonded: Cys44/Cys68, Cys47/Cys87, Cys91/Cys102, and Cys103/Cys108.

This sequence belongs to the three-finger toxin family. Ancestral subfamily. Boigatoxin sub-subfamily. Expressed by the venom gland.

The protein localises to the secreted. Functionally, potent postsynaptic neurotoxin. Displays readily reversible competitive antagonism at the nicotinic acetylcholine receptor (nAChR). The polypeptide is Toxin 3FTx-Tri3 (Trimorphodon biscutatus (Western lyre snake)).